Here is a 901-residue protein sequence, read N- to C-terminus: HTH-type transcriptional regulator MalT (901 aa).

Position 39-46 (39-46 (SPAGYGKT)) interacts with ATP. The HTH luxR-type domain maps to 829 to 894 (ELIRTSPLTQ…AAVQHAQKLL (66 aa)). Positions 853-872 (NEQIAGELEVAATTIKTHIR) form a DNA-binding region, H-T-H motif.

The protein belongs to the MalT family. As to quaternary structure, monomer in solution. Oligomerizes to an active state in the presence of the positive effectors ATP and maltotriose.

With respect to regulation, activated by ATP and maltotriose, which are both required for DNA binding. Its function is as follows. Positively regulates the transcription of the maltose regulon whose gene products are responsible for uptake and catabolism of malto-oligosaccharides. Specifically binds to the promoter region of its target genes, recognizing a short DNA motif called the MalT box. The protein is HTH-type transcriptional regulator MalT of Shigella boydii serotype 4 (strain Sb227).